We begin with the raw amino-acid sequence, 118 residues long: V-type proton ATPase subunit G 1 (118 aa).

The residue at position 2 (Ala-2) is an N-acetylalanine.

Belongs to the V-ATPase G subunit family. V-ATPase is a heteromultimeric enzyme made up of two complexes: the ATP-hydrolytic V1 complex and the proton translocation V0 complex. The V1 complex consists of three catalytic AB heterodimers that form a heterohexamer, three peripheral stalks each consisting of EG heterodimers, one central rotor including subunits D and F, and the regulatory subunits C and H. The proton translocation complex V0 consists of the proton transport subunit a, a ring of proteolipid subunits c9c'', rotary subunit d, subunits e and f, and the accessory subunits ATP6AP1/Ac45 and ATP6AP2/PRR. In terms of tissue distribution, kidney; localizes to early distal nephron, encompassing thick ascending limbs and distal convoluted tubules (at protein level). Ubiquitous.

The protein resides in the apical cell membrane. Functionally, subunit of the V1 complex of vacuolar(H+)-ATPase (V-ATPase), a multisubunit enzyme composed of a peripheral complex (V1) that hydrolyzes ATP and a membrane integral complex (V0) that translocates protons. V-ATPase is responsible for acidifying and maintaining the pH of intracellular compartments and in some cell types, is targeted to the plasma membrane, where it is responsible for acidifying the extracellular environment. In aerobic conditions, involved in intracellular iron homeostasis, thus triggering the activity of Fe(2+) prolyl hydroxylase (PHD) enzymes, and leading to HIF1A hydroxylation and subsequent proteasomal degradation. This is V-type proton ATPase subunit G 1 (ATP6V1G1) from Homo sapiens (Human).